The primary structure comprises 441 residues: MSNVTRQPKIGFVSLGCPKNLVDSERILTELRTEGYDVVPSYDDADMVIVNTCGFIDSAVQESLEAIGEALTENGKVIVTGCLGAKVDQIREVHPKVLEITGPHSYEQVLEHVHHYVPKPKHNPFLSLVPEQGVKLTPRHYAYLKISEGCNHRCTFCIIPSMRGDLVSRPIGEVLSEAKRLVDAGVKEILVISQDTSAYGVDVKHRTGFHNGEPVKTSMVDLCEQLSKLGIWTRLHYVYPYPHVDDVIPLMAEGKILPYLDIPLQHASPRILKLMKRPGAVDRQLARIKQWREICPELTLRSTFIVGFPGETEDDFQMLLDFLKEARLDRVGCFKYSPVEGAGANALPDQVPEEVKEERWNRFMQLQQQISAERLQEKVGREILVIIDEVDKEGAIGRSMADAPEIDGAVYLNGETNVKPGDVIRVKVDNADEYDLWGSRV.

An MTTase N-terminal domain is found at 8–118 (PKIGFVSLGC…VLEHVHHYVP (111 aa)). [4Fe-4S] cluster is bound by residues Cys-17, Cys-53, Cys-82, Cys-150, Cys-154, and Cys-157. The Radical SAM core domain occupies 136–373 (LTPRHYAYLK…MQLQQQISAE (238 aa)). The TRAM domain maps to 376 to 441 (QEKVGREILV…DEYDLWGSRV (66 aa)).

This sequence belongs to the methylthiotransferase family. RimO subfamily. It depends on [4Fe-4S] cluster as a cofactor.

Its subcellular location is the cytoplasm. The enzyme catalyses L-aspartate(89)-[ribosomal protein uS12]-hydrogen + (sulfur carrier)-SH + AH2 + 2 S-adenosyl-L-methionine = 3-methylsulfanyl-L-aspartate(89)-[ribosomal protein uS12]-hydrogen + (sulfur carrier)-H + 5'-deoxyadenosine + L-methionine + A + S-adenosyl-L-homocysteine + 2 H(+). In terms of biological role, catalyzes the methylthiolation of an aspartic acid residue of ribosomal protein uS12. This chain is Ribosomal protein uS12 methylthiotransferase RimO, found in Citrobacter koseri (strain ATCC BAA-895 / CDC 4225-83 / SGSC4696).